The primary structure comprises 105 residues: UPF0473 protein SAK_2028 (105 aa).

This sequence belongs to the UPF0473 family.

This is UPF0473 protein SAK_2028 from Streptococcus agalactiae serotype Ia (strain ATCC 27591 / A909 / CDC SS700).